Consider the following 239-residue polypeptide: Phosphoribosylaminoimidazole-succinocarboxamide synthase (239 aa).

This sequence belongs to the SAICAR synthetase family.

It carries out the reaction 5-amino-1-(5-phospho-D-ribosyl)imidazole-4-carboxylate + L-aspartate + ATP = (2S)-2-[5-amino-1-(5-phospho-beta-D-ribosyl)imidazole-4-carboxamido]succinate + ADP + phosphate + 2 H(+). Its pathway is purine metabolism; IMP biosynthesis via de novo pathway; 5-amino-1-(5-phospho-D-ribosyl)imidazole-4-carboxamide from 5-amino-1-(5-phospho-D-ribosyl)imidazole-4-carboxylate: step 1/2. The polypeptide is Phosphoribosylaminoimidazole-succinocarboxamide synthase (Bacillus cereus (strain AH187)).